The chain runs to 268 residues: GTP cyclohydrolase FolE2 (268 aa).

It belongs to the GTP cyclohydrolase IV family.

It carries out the reaction GTP + H2O = 7,8-dihydroneopterin 3'-triphosphate + formate + H(+). It participates in cofactor biosynthesis; 7,8-dihydroneopterin triphosphate biosynthesis; 7,8-dihydroneopterin triphosphate from GTP: step 1/1. Its function is as follows. Converts GTP to 7,8-dihydroneopterin triphosphate. In Methylococcus capsulatus (strain ATCC 33009 / NCIMB 11132 / Bath), this protein is GTP cyclohydrolase FolE2.